The chain runs to 278 residues: NADPH-dependent 7-cyano-7-deazaguanine reductase (278 aa).

87–89 (IES) serves as a coordination point for substrate. NADPH is bound at residue 89-90 (SK). Cys-185 serves as the catalytic Thioimide intermediate. Residue Asp-192 is the Proton donor of the active site. 224-225 (HE) contributes to the substrate binding site. 253–254 (RG) contributes to the NADPH binding site. A disordered region spans residues 255 to 278 (GLDINPYRSTNPTFSVQNHRSFRQ). The span at 261 to 278 (YRSTNPTFSVQNHRSFRQ) shows a compositional bias: polar residues.

It belongs to the GTP cyclohydrolase I family. QueF type 2 subfamily. As to quaternary structure, homodimer.

It localises to the cytoplasm. It catalyses the reaction 7-aminomethyl-7-carbaguanine + 2 NADP(+) = 7-cyano-7-deazaguanine + 2 NADPH + 3 H(+). Its pathway is tRNA modification; tRNA-queuosine biosynthesis. In terms of biological role, catalyzes the NADPH-dependent reduction of 7-cyano-7-deazaguanine (preQ0) to 7-aminomethyl-7-deazaguanine (preQ1). The polypeptide is NADPH-dependent 7-cyano-7-deazaguanine reductase (Coxiella burnetii (strain CbuK_Q154) (Coxiella burnetii (strain Q154))).